The primary structure comprises 139 residues: Putative nickel-responsive regulator (139 aa).

The Ni(2+) site is built by H79, H90, H92, and C98.

The protein belongs to the transcriptional regulatory CopG/NikR family. Requires Ni(2+) as cofactor.

In terms of biological role, transcriptional regulator. The protein is Putative nickel-responsive regulator of Geotalea uraniireducens (strain Rf4) (Geobacter uraniireducens).